The sequence spans 242 residues: MSETILITGSSRGIGKAIALRLAQAGFDIVVHCRSRIEEAEAVAQAVRELGQNARVLQFDVSCRSEAADKLTADVEAHGAYYGVVLNAGLTRDNAFPALTDEDWDRVLRTNLDGFYNVLHPIMMPMIRRRKAGRIVCITSVSGLIGNRGQVNYSASKAGIIGAAKALAVELAKRKITVNCVAPGLIDTDILDENVPIDEILKMIPAGRMGDPEEVAHAVNFLMGEKAAYVTRQVIAVNGGLC.

NADP(+) contacts are provided by residues 9–12 (GSSR), arginine 34, 60–61 (DV), and asparagine 87. Substrate is bound at residue serine 140. Residue tyrosine 153 is the Proton acceptor of the active site. Residues 153 to 157 (YSASK) and isoleucine 186 each bind NADP(+).

Belongs to the short-chain dehydrogenases/reductases (SDR) family. As to quaternary structure, homotetramer.

It catalyses the reaction a (3R)-hydroxyacyl-[ACP] + NADP(+) = a 3-oxoacyl-[ACP] + NADPH + H(+). It participates in lipid metabolism; fatty acid biosynthesis. Its function is as follows. Catalyzes the NADPH-dependent reduction of beta-ketoacyl-ACP substrates to beta-hydroxyacyl-ACP products, the first reductive step in the elongation cycle of fatty acid biosynthesis. This Aggregatibacter actinomycetemcomitans (Actinobacillus actinomycetemcomitans) protein is 3-oxoacyl-[acyl-carrier-protein] reductase FabG (fabG).